Here is a 691-residue protein sequence, read N- to C-terminus: DNA ligase (691 aa).

Residues 41-45 (DAEYD), 90-91 (SL), and Glu130 contribute to the NAD(+) site. Lys132 functions as the N6-AMP-lysine intermediate in the catalytic mechanism. NAD(+) is bound by residues Arg153, Glu190, Lys307, and Lys331. Residues Cys425, Cys428, Cys443, and Cys449 each coordinate Zn(2+). The BRCT domain occupies 610 to 691 (APQGVLAGKT…MHTLLEGHAR (82 aa)).

It belongs to the NAD-dependent DNA ligase family. LigA subfamily. Mg(2+) serves as cofactor. Mn(2+) is required as a cofactor.

The enzyme catalyses NAD(+) + (deoxyribonucleotide)n-3'-hydroxyl + 5'-phospho-(deoxyribonucleotide)m = (deoxyribonucleotide)n+m + AMP + beta-nicotinamide D-nucleotide.. DNA ligase that catalyzes the formation of phosphodiester linkages between 5'-phosphoryl and 3'-hydroxyl groups in double-stranded DNA using NAD as a coenzyme and as the energy source for the reaction. It is essential for DNA replication and repair of damaged DNA. This chain is DNA ligase, found in Burkholderia mallei (strain NCTC 10247).